Here is a 292-residue protein sequence, read N- to C-terminus: MITGSLVALVTPMYPNGDIHWEDLDKLVDFHIENGTHGIVAVGTTGESATLDPEEHIRTIGHIIKRVNGRIPVIAGTGGNSTREAIELTTEAHKLGADACLLVVPYYNKPTQEGLYQHFKAIAEAVPGMSQILYNVPGRTACDMLNETVVRLADIPNIVGIKDATGNIPRGAELIEALDGRLAVYSGDDATAADLMLAGAKGNVSVTANVAPKAMAELCEAAIAGNEDETRRLNELLMPLNRKLFLEANPIPVKWALYRMGMIGEGIRLPLTPLSEKFHGEVEDALKASGVL.

Residue T45 coordinates pyruvate. The active-site Proton donor/acceptor is the Y134. K162 serves as the catalytic Schiff-base intermediate with substrate. V204 contributes to the pyruvate binding site.

This sequence belongs to the DapA family. As to quaternary structure, homotetramer; dimer of dimers.

It is found in the cytoplasm. It catalyses the reaction L-aspartate 4-semialdehyde + pyruvate = (2S,4S)-4-hydroxy-2,3,4,5-tetrahydrodipicolinate + H2O + H(+). The protein operates within amino-acid biosynthesis; L-lysine biosynthesis via DAP pathway; (S)-tetrahydrodipicolinate from L-aspartate: step 3/4. Functionally, catalyzes the condensation of (S)-aspartate-beta-semialdehyde [(S)-ASA] and pyruvate to 4-hydroxy-tetrahydrodipicolinate (HTPA). This is 4-hydroxy-tetrahydrodipicolinate synthase from Marinobacter nauticus (strain ATCC 700491 / DSM 11845 / VT8) (Marinobacter aquaeolei).